Here is a 212-residue protein sequence, read N- to C-terminus: Thymidylate kinase (212 aa).

Residue 10–17 coordinates ATP; sequence GPDGAGKT.

The protein belongs to the thymidylate kinase family.

The catalysed reaction is dTMP + ATP = dTDP + ADP. Its function is as follows. Phosphorylation of dTMP to form dTDP in both de novo and salvage pathways of dTTP synthesis. This chain is Thymidylate kinase, found in Lactobacillus delbrueckii subsp. bulgaricus (strain ATCC 11842 / DSM 20081 / BCRC 10696 / JCM 1002 / NBRC 13953 / NCIMB 11778 / NCTC 12712 / WDCM 00102 / Lb 14).